The sequence spans 1747 residues: MNWNEKPKSATLPPLYPKSQPPFLHQSLINQITTTSQSSFSYPGSNQEACMYPGNSNPISQPLLNIQNYPQQISVSDMHNGTVVASHTSVERITYANVNGPKQLTHNLQMSSGVTQNVWLNSPMRNPVHSHIGATVSHQTDFGANVPNMPALQSQLITSDTYSMQMQMIPSNSTRLPVAYQGNQGLNQSFSEQQVDWTQQCISKGLTYPDYRPPPKLYRYSPQSFLPDSTIQKQNFIPHTSLQVKNSQLLNSVLTLPSRQTSAVPSQQYATQTDKRPPPPPYNCRYGSQPLQSTQHITKHLSMEVPQSREMLSSEIRTSFQQQWQNPNENVSTIGNFTNLKVNTNSKQPFNSPIRSSVDGVQTLAQTNEEKIMDSCNPTSNQVLDTSVAKEKLVRDIKTLVEIKQKFSELARKIKINKDLLMAAGCIKMTNTSYSEPAQNSKLSLKQTAKIQSGPQITPVMPENAERQTPTVVESAETNKTQCMLNSDIQEVNCRRFNQVDSVLPNPVYSEKRPMPDSSHDVKVLTSKTSAVEMTQAVLNTQLSSENVTKVEQNSPAVCETISVPKSMSTEEYKSKIQNENMLLLALLSQARKTQKTVLKDANQTIQDSKPDSCEMNPNTQMTGNQLNLKNMETPSTSNVSGRVLDNSFCSGQESSTKGMPAKSDSSCSMEVLATCLSLWKKQPSDTAKEKECDKLRTNTTAVGISKPANIHVKSPCSVVGNSNSQNKISNPSQQTALSMVMHNYESSGINITKGTELQIAVVSPLVLSEVKTLSVKGITPAVLPETVYPVIKEGSVCSLQNQLAENAKATAALKVDVSGPVASTATSTKIFPLTQKEKQNESTNGNSEVTPNVNQGKHNKLESAIHSPMNDQQISQESRNSTVVSSDTLQIDNICSLVEGDTSYNSQIAKIFSSLPLKMVEPQKPSLPNQQGIGSREPEKQLDNTTENKDFGFQKDKPVQCTDVSHKICDQSKSEPPLESSFNNLETNRVILEKSSLEHATEKSTANDTCSSAAIQEDIYPQEIDASSNYTPQDPARNEIHSDKAPVLYLHDQLSELLKEFPYGIEAVNTREGSVGQQTTYQTSEDQTADKTSSDSKDPADQIQITILSSEQMKEIFPEQDDQPYVVDKLAEPQKEEPITEVVSQCDLQAPAAGQSRDSVILDSEKDDIHCCALGWLSMVYEGVPQCQCNSIKNSSSEEEKQKEQCSPLDTNSCKQGERTSDRDVTVVQFKSLVNNPKTPPDGKSHFPELQDDSRKDTPKTKHKSLPRTEQELVAGQFSSKCDKLNPLQNHKRKKLRFHEVTFHSSNKMTASYEQASQETRQKKHVTQNSRPLKTKTAFLPNKDVYKKHSSLGQSLSPEKIKLKLKSVSFKQKRKLDQGNVLDMEVKKKKHDKQEQKGSVGATFKLGDSLSNPNERAIVKEKMVSNTKSVDTKASSSKFSRILTPKEYLQRQKHKEALSNKASKKICVKNVPCDSEHMRPSKLAVQVESCGKSNEKHSSGVQTSKESLNGLTSHGKNLKIHHSQESKTYNILRNVKEKVGGKQPDKIWIDKTKLDKLTNISNEAQFSQMPPQVKDQKKLYLNRVGFKCTERESISLTKLESSPRKLHKDKRQENKHKTFLPVKGNTEKSNMLEFKLCPDILLKNTNSVEERKDVKPHPRKEQAPLQVSGIKSTKEDWLKFVATKKRTQKDSQERDNVNSRLSKRSFSADGFEMLQNPVKDSKEMFQTYKQMYLEKRSRSLGSSPVK.

Residue Lys216 forms a Glycyl lysine isopeptide (Lys-Gly) (interchain with G-Cter in SUMO2) linkage. Ser221 carries the post-translational modification Phosphoserine. Residues Thr261 to Gln272 are compositionally biased toward polar residues. The segment at Thr261–Pro280 is disordered. A Glycyl lysine isopeptide (Lys-Gly) (interchain with G-Cter in SUMO2) cross-link involves residue Lys707. Disordered stretches follow at residues Pro833–Gln856, Pro923–Lys956, and Glu1073–Ala1101. The span at Glu842 to Gln856 shows a compositional bias: polar residues. A compositionally biased stretch (basic and acidic residues) spans Arg937–Lys956. Residues Glu1073–Asp1087 are compositionally biased toward polar residues. Positions Thr1089–Ala1101 are enriched in basic and acidic residues. Residue Lys1136 forms a Glycyl lysine isopeptide (Lys-Gly) (interchain with G-Cter in SUMO2) linkage. At Ser1145 the chain carries Phosphoserine. The segment at Glu1200 to Leu1274 is disordered. Residues Gln1217 to Val1226 are compositionally biased toward basic and acidic residues. Thr1240 is subject to Phosphothreonine. Positions Pro1242–Lys1261 are enriched in basic and acidic residues. Residue Ser1358 is modified to Phosphoserine. Residues Lys1528 and Lys1636 each participate in a glycyl lysine isopeptide (Lys-Gly) (interchain with G-Cter in SUMO2) cross-link. Residues Lys1686–Gln1716 are disordered. Residues Gln1689–Val1698 show a composition bias toward basic and acidic residues. Residue Ser1708 is modified to Phosphoserine. Residue Lys1723 forms a Glycyl lysine isopeptide (Lys-Gly) (interchain with G-Cter in SUMO2) linkage. At Ser1740 the chain carries Phosphoserine.

In terms of assembly, interacts with SETDB1.

The protein resides in the nucleus. Plays a role in the regulation of imprinted gene expression, regulates repressive epigenetic modifications associated with SETDB1. Required for the recruitment or accumulation of SETDB1 to the endogenous retroviruses (ERVs) and maintenance of repressive chromatin configuration, contributing to a subset of the SETDB1-dependent ERV silencing in embryonic stem cells. The sequence is that of Retroelement silencing factor 1 from Homo sapiens (Human).